The chain runs to 356 residues: UDP-N-acetylglucosamine--N-acetylmuramyl-(pentapeptide) pyrophosphoryl-undecaprenol N-acetylglucosamine transferase (356 aa).

Residues 11–13 (TGG), N122, S186, and Q287 each bind UDP-N-acetyl-alpha-D-glucosamine.

This sequence belongs to the glycosyltransferase 28 family. MurG subfamily.

It is found in the cell inner membrane. The enzyme catalyses di-trans,octa-cis-undecaprenyl diphospho-N-acetyl-alpha-D-muramoyl-L-alanyl-D-glutamyl-meso-2,6-diaminopimeloyl-D-alanyl-D-alanine + UDP-N-acetyl-alpha-D-glucosamine = di-trans,octa-cis-undecaprenyl diphospho-[N-acetyl-alpha-D-glucosaminyl-(1-&gt;4)]-N-acetyl-alpha-D-muramoyl-L-alanyl-D-glutamyl-meso-2,6-diaminopimeloyl-D-alanyl-D-alanine + UDP + H(+). The protein operates within cell wall biogenesis; peptidoglycan biosynthesis. Cell wall formation. Catalyzes the transfer of a GlcNAc subunit on undecaprenyl-pyrophosphoryl-MurNAc-pentapeptide (lipid intermediate I) to form undecaprenyl-pyrophosphoryl-MurNAc-(pentapeptide)GlcNAc (lipid intermediate II). The protein is UDP-N-acetylglucosamine--N-acetylmuramyl-(pentapeptide) pyrophosphoryl-undecaprenol N-acetylglucosamine transferase of Anaplasma marginale (strain St. Maries).